Here is a 470-residue protein sequence, read N- to C-terminus: Cysteine--tRNA ligase (470 aa).

Residue cysteine 28 coordinates Zn(2+). A 'HIGH' region motif is present at residues proline 30–asparagine 40. Zn(2+)-binding residues include cysteine 212, histidine 237, and glutamate 241. A 'KMSKS' region motif is present at residues lysine 271–serine 275. Lysine 274 contributes to the ATP binding site.

It belongs to the class-I aminoacyl-tRNA synthetase family. In terms of assembly, monomer. It depends on Zn(2+) as a cofactor.

It is found in the cytoplasm. It carries out the reaction tRNA(Cys) + L-cysteine + ATP = L-cysteinyl-tRNA(Cys) + AMP + diphosphate. The sequence is that of Cysteine--tRNA ligase from Ligilactobacillus salivarius (strain UCC118) (Lactobacillus salivarius).